The chain runs to 1262 residues: Zinc finger protein 592 (1262 aa).

The tract at residues 23–45 is disordered; sequence SLDAKEAIQAPSEENESPLKSSG. Phosphoserine is present on residues Ser-78, Ser-142, Ser-145, and Ser-146. 3 disordered regions span residues 122-174, 200-278, and 294-494; these read SFTS…PPPG, KKEP…AHSK, and VANV…ASTP. Glycyl lysine isopeptide (Lys-Gly) (interchain with G-Cter in SUMO2) cross-links involve residues Lys-200 and Lys-204. Basic and acidic residues-rich tracts occupy residues 213–232 and 298–308; these read QQEHEQGGQKVVEPHKDLDS and TKEDQPGHTKD. Low complexity predominate over residues 343–367; that stretch reads PSDSPRSICSDSSSKGSPSVAASSP. A compositionally biased stretch (polar residues) spans 454-463; the sequence is IKTSDSSSPC. A compositionally biased stretch (low complexity) spans 484 to 494; it reads QQSTAPQASTP. Position 529 is a phosphoserine (Ser-529). A Glycyl lysine isopeptide (Lys-Gly) (interchain with G-Cter in SUMO2) cross-link involves residue Lys-546. Ser-573 is modified (phosphoserine). The C2H2-type 1; atypical zinc-finger motif lies at 587-612; it reads YCCLECGDAFALEKSLSQHYSRRSVH. A C2H2-type 2; atypical zinc finger spans residues 615–639; sequence VLCTLCSKTLLFFNKCSLLRHARDH. Residue Ser-691 is modified to Phosphoserine. A C2H2-type 3; degenerate zinc finger spans residues 711–731; it reads TKCPECHKQMRDYMVLATHFQ. The C2H2-type 4 zinc-finger motif lies at 740–764; the sequence is LTCQVCQMLLPNQCSFCAHQRIHAH. Residues 768–790 form a C2H2-type 5; atypical zinc finger; sequence YCCPECGVLCRSAYFQTHVKENC. 3 C2H2-type zinc fingers span residues 799-822, 827-850, and 892-915; these read YRCIHCGVIHLTLALLKSHIQERH, HKCAFCPMAFKTASSTMDHSTTQH, and FKCPECPLLFLQKPELMQHVKNTH. Positions 924 to 935 are enriched in low complexity; that stretch reads LSSLQSSTDTSS. The interval 924–979 is disordered; it reads LSSLQSSTDTSSNRPGSRAPAEPPATNVAARGSSLTAGRWGRPEAHRRAEARPRMR. Positions 964–976 are enriched in basic and acidic residues; sequence GRPEAHRRAEARP. C2H2-type zinc fingers lie at residues 983 to 1006 and 1013 to 1036; these read WTCQECQEWVPDRESYVSHMKKSH and YPCRQCEQSFHNPSSLRKHIRNNH. A C2H2-type 11; atypical zinc finger spans residues 1043-1069; sequence YTCGYCTEDSPSFPRPSLLESHISLMH. Position 1089 is a phosphoserine (Ser-1089). The C2H2-type 12; atypical zinc finger occupies 1124-1146; that stretch reads FQCAKCTFATDSELEFQSHIPQH. The C2H2-type 13 zinc-finger motif lies at 1153–1176; the sequence is AQCLLCGLCYTSTSSLNRHLFIVH. 2 positions are modified to phosphoserine: Ser-1198 and Ser-1202. Positions 1222 to 1262 are disordered; it reads PLVTDLGGQQGLALDEDSAQDPQNQPQASQDQNSHALSPQV. The span at 1241–1262 shows a compositional bias: polar residues; that stretch reads QDPQNQPQASQDQNSHALSPQV.

This sequence belongs to the krueppel C2H2-type zinc-finger protein family. As to quaternary structure, interacts with ZMYND8. As to expression, expressed in the brain.

The protein resides in the nucleus. May be involved in transcriptional regulation. The polypeptide is Zinc finger protein 592 (Znf592) (Mus musculus (Mouse)).